Reading from the N-terminus, the 433-residue chain is MDRKTRLSEPPTLALRLKPYKTAIQQLRSVIRALKENTTVTFLPTPSLILQTVRSHCVSKITFNSSCLYITDKSFQPKTINNSTPLLGNFMYLTSSKDLTKFYVQDISDLSAKISMCAPDFNMEFSSACVHGQDIVRESENSAVHVDLDFGVVADLLKWIGPHTRVKRNVKKAPCPTGTVQILVHAGPPAIKFILTNGSELEFTANNRVSFHGVKNMRINVQLKNFYQTLLNCAVTKLPCTLRIVTEHDTLLYVASRNGLFAVENFLTEEPFQRGDPFDKNYVGNSGKSRGGGGGGGSLSSLANAGGLHDDGPGLDNDLMNEPMGLGGLGGGGGGGGKKHDRGGGGGSGTRKMSSGGGGGDHDHGLSSKEKYEQHKITSYLTSKGGSGGGGGGGGGGLDRNSGNYFNDAKEESDSEDSVTFEFVPNTKKQKCG.

A disordered region spans residues 274–433 (RGDPFDKNYV…VPNTKKQKCG (160 aa)). 3 stretches are compositionally biased toward gly residues: residues 289 to 298 (SRGGGGGGGS), 325 to 336 (GLGGLGGGGGGG), and 344 to 359 (GGGGSGTRKMSSGGGG). Basic and acidic residues predominate over residues 360–376 (GDHDHGLSSKEKYEQHK). A compositionally biased stretch (gly residues) spans 385 to 398 (GGSGGGGGGGGGGL). Lys-410 participates in a covalent cross-link: Glycyl lysine isopeptide (Lys-Gly) (interchain with G-Cter in host SUMO1). Phosphoserine occurs at positions 413, 415, and 418.

This sequence belongs to the herpesviridae polymerase accessory protein family. Forms homodimers. Interacts with host SMARCB1. Interacts with host NCL/nucleolin; this interaction is important for the organization of proteins within viral replication compartments. Interacts with UL112/UL113; this interaction is necessary for efficient viral DNA replication. Interacts with UL84. Interacts with the uracil DNA glycosylase UL114. Interacts with the DNA polymerase catalytic subunit UL54. Interacts with host IRF3. Interacts with host RELA. Post-translationally, phosphorylated by UL97 on serine residues, phosphorylation seems important for UL44 nuclear entry but does not directly affect its role in replication. In terms of processing, sumoylated. Sumoylation on Lys-410 increases viral DNA replication.

It is found in the virion. The protein localises to the host nucleus. Its function is as follows. Accessory subunit of the DNA polymerase that plays an essential role in viral DNA replication and acts by increasing the processivity of polymerization. Forms dimers that binds to double-stranded DNA and UL54 specifically to stimulates long chain DNA synthesis efficiently. Plays an important role in maintaining the structure of viral replication compartments by interacting with host nucleolin/NUC. In addition, suppresses innate immune responses through effects on host IRF3 and NF-kappa-B. Mechanistically, interfere with the binding of IRF3 and the p65 NF-kappa-B subunit to the promoters of antiviral genes, thereby inhibiting the expression of these genes. The chain is DNA polymerase processivity factor (UL44) from Homo sapiens (Human).